The primary structure comprises 441 residues: Asparagine--tRNA ligase, mitochondrial (441 aa).

The protein belongs to the class-II aminoacyl-tRNA synthetase family.

The protein resides in the mitochondrion. It catalyses the reaction tRNA(Asn) + L-asparagine + ATP = L-asparaginyl-tRNA(Asn) + AMP + diphosphate + H(+). In Schizosaccharomyces pombe (strain 972 / ATCC 24843) (Fission yeast), this protein is Asparagine--tRNA ligase, mitochondrial (slm5).